The sequence spans 119 residues: Toxin ICK-11 (119 aa).

The N-terminal stretch at 1–19 is a signal peptide; that stretch reads MMKLYSLVIIATLAAAAFA. 4 disulfide bridges follow: Cys-59/Cys-74, Cys-67/Cys-80, Cys-71/Cys-116, and Cys-73/Cys-87.

This sequence belongs to the neurotoxin 25 family. ICK-8 subfamily. As to expression, expressed by the venom gland.

Its subcellular location is the secreted. In terms of biological role, ion channel inhibitor. The polypeptide is Toxin ICK-11 (Trittame loki (Brush-footed trapdoor spider)).